A 269-amino-acid polypeptide reads, in one-letter code: Expansin-B11 (269 aa).

The first 30 residues, 1–30, serve as a signal peptide directing secretion; sequence MTVVSIMWSLVQVQVLVAVALAFLVGGAWC. N-linked (GlcNAc...) asparagine glycosylation occurs at Asn-40. Positions 69-175 constitute an Expansin-like EG45 domain; it reads GGGCGYKDVN…RRVKCKYGSK (107 aa). Cystine bridges form between Cys-72-Cys-100, Cys-103-Cys-170, and Cys-108-Cys-114. An Expansin-like CBD domain is found at 187–268; the sequence is NYLALLVKYV…GWKPNTAYTA (82 aa).

It belongs to the expansin family. Expansin B subfamily. In terms of tissue distribution, expressed in pollen.

Its subcellular location is the secreted. The protein resides in the cell wall. It is found in the membrane. Its function is as follows. May aid fertilization by loosening the cell wall of the stigma and style, thereby facilitating penetration of the pollen tube. Acts selectively on grass cell walls, which are relatively poor in pectins and xyloglucans and rich in glucuronoarabinoxylans and (1-3),(1-4)-beta-D-glucans, when compared with cell walls of other angiosperms, including other monocots. This Zea mays (Maize) protein is Expansin-B11 (EXPB11).